The following is a 58-amino-acid chain: Preprotein translocase subunit SecG (58 aa).

Residues 1–33 are Cytoplasmic-facing; that stretch reads MARRKKYEGLNPFVAAGLIKFSEEGEMERIKLS. A helical membrane pass occupies residues 34-55; sequence PKAAIAVSAAIIAALIIINLLL. Residues 56–58 are Extracellular-facing; the sequence is PPL.

Belongs to the SEC61-beta family. In terms of assembly, component of the protein translocase complex. Heterotrimer consisting of alpha (SecY), beta (SecG) and gamma (SecE) subunits. Can form oligomers of the heterotrimer.

Its subcellular location is the cell membrane. Its function is as follows. Involved in protein export. The function of the beta subunit is unknown, but it may be involved in stabilization of the trimeric complex. The polypeptide is Preprotein translocase subunit SecG (Pyrobaculum arsenaticum (strain DSM 13514 / JCM 11321 / PZ6)).